The following is a 364-amino-acid chain: 3-dehydroquinate synthase (364 aa).

NAD(+) contacts are provided by residues 71–76 (DGEQYK), 105–109 (GVIGD), 129–130 (TT), Lys-142, Lys-151, and 169–172 (CLKT). Residues Glu-184, His-247, and His-264 each contribute to the Zn(2+) site.

Belongs to the sugar phosphate cyclases superfamily. Dehydroquinate synthase family. The cofactor is Co(2+). It depends on Zn(2+) as a cofactor. NAD(+) serves as cofactor.

It is found in the cytoplasm. The enzyme catalyses 7-phospho-2-dehydro-3-deoxy-D-arabino-heptonate = 3-dehydroquinate + phosphate. It participates in metabolic intermediate biosynthesis; chorismate biosynthesis; chorismate from D-erythrose 4-phosphate and phosphoenolpyruvate: step 2/7. Catalyzes the conversion of 3-deoxy-D-arabino-heptulosonate 7-phosphate (DAHP) to dehydroquinate (DHQ). The protein is 3-dehydroquinate synthase of Klebsiella pneumoniae (strain 342).